The chain runs to 438 residues: Glutamyl-tRNA(Gln) amidotransferase subunit D (438 aa).

An Asparaginase/glutaminase domain is found at 91–421 (KNLSILSTGG…SEIYEIMKTN (331 aa)). Active-site residues include T101, T177, D178, and K254.

The protein belongs to the asparaginase 1 family. GatD subfamily. In terms of assembly, heterodimer of GatD and GatE.

The catalysed reaction is L-glutamyl-tRNA(Gln) + L-glutamine + ATP + H2O = L-glutaminyl-tRNA(Gln) + L-glutamate + ADP + phosphate + H(+). Allows the formation of correctly charged Gln-tRNA(Gln) through the transamidation of misacylated Glu-tRNA(Gln) in organisms which lack glutaminyl-tRNA synthetase. The reaction takes place in the presence of glutamine and ATP through an activated gamma-phospho-Glu-tRNA(Gln). The GatDE system is specific for glutamate and does not act on aspartate. The polypeptide is Glutamyl-tRNA(Gln) amidotransferase subunit D (Methanosphaera stadtmanae (strain ATCC 43021 / DSM 3091 / JCM 11832 / MCB-3)).